Consider the following 325-residue polypeptide: Olfactory receptor 14L1 (325 aa).

Over 1 to 43 (MAQFNKNQLIACRRNGTTTSDFNQTEVAEFFLMGFSNSWDIQI) the chain is Extracellular. A helical transmembrane segment spans residues 44–64 (VHAALFFLVYLAAVIGNLLII). Residues 65–72 (ILTTLDVH) lie on the Cytoplasmic side of the membrane. A helical membrane pass occupies residues 73–93 (LQTPMYFFLRNLSFLDFCYIS). Residues 94–117 (VTIPKSIVSSLTHDTSISFFGCAL) are Extracellular-facing. The chain crosses the membrane as a helical span at residues 118–138 (QAFFFMDLATTEVAILTVMSY). Residues 139 to 151 (DRYMAICRPLHYE) are Cytoplasmic-facing. Residues 152–172 (VIINQGVCLRMMAMSWLSGVI) traverse the membrane as a helical segment. Residues 173–214 (CGFMHVIATFSLPFCGRNRIRQFFCNIPQLLSLLDPKVITIE) are Extracellular-facing. A helical transmembrane segment spans residues 215 to 235 (IGVMVFGTSLVIISFVVITLS). Residues 236-255 (YMYIFSVIMRIPSKEGRSKT) lie on the Cytoplasmic side of the membrane. A helical transmembrane segment spans residues 256 to 276 (FSTCIPHLVVVTLFMISGSIA). Residues 277 to 289 (YVKPISNSPPVLD) are Extracellular-facing. A helical transmembrane segment spans residues 290–310 (VFLSAFYTVVPPTLNPVIYSL). Topologically, residues 311–325 (RNRDMKAALRRQCGP) are cytoplasmic.

It belongs to the G-protein coupled receptor 1 family.

Its subcellular location is the cell membrane. In terms of biological role, odorant receptor. The chain is Olfactory receptor 14L1 from Homo sapiens (Human).